Consider the following 108-residue polypeptide: UPF0060 membrane protein SH0717 (108 aa).

The next 4 membrane-spanning stretches (helical) occupy residues 5–25 (IFIF…IWLW), 31–51 (SSWL…IATF), 60–80 (VYAA…YIVD), and 86–106 (KYDL…ILPS).

The protein belongs to the UPF0060 family.

It is found in the cell membrane. The polypeptide is UPF0060 membrane protein SH0717 (Staphylococcus haemolyticus (strain JCSC1435)).